A 380-amino-acid chain; its full sequence is Cystathionine gamma-synthase (380 aa).

Lysine 195 is modified (N6-(pyridoxal phosphate)lysine).

The protein belongs to the trans-sulfuration enzymes family. Homotetramer. It depends on pyridoxal 5'-phosphate as a cofactor.

The protein resides in the cytoplasm. It catalyses the reaction O-succinyl-L-homoserine + L-cysteine = L,L-cystathionine + succinate + H(+). Functionally, catalyzes the formation of L-cystathionine from O-succinyl-L-homoserine (OSHS) and L-cysteine, via a gamma-replacement reaction. In the absence of thiol, catalyzes gamma-elimination to form 2-oxobutanoate, succinate and ammonia. The polypeptide is Cystathionine gamma-synthase (metB) (Helicobacter pylori (strain ATCC 700392 / 26695) (Campylobacter pylori)).